Here is an 84-residue protein sequence, read N- to C-terminus: MPYVLISTQIRMETGPTIVGDEFSDTQLMAQLEADKRTVLGNNFSEYCVNEPPRVTLNKLEKLGYRVVSMTGVGQTLVWCLHKE.

The protein belongs to the GFRP family. Homopentamer. Forms a complex with GCH1 where a GCH1 homodecamer is sandwiched by two GFRP homopentamers.

Its subcellular location is the nucleus. The protein localises to the nucleus membrane. The protein resides in the cytoplasm. It localises to the cytosol. In terms of biological role, mediates tetrahydrobiopterin inhibition of GTP cyclohydrolase 1. The chain is GTP cyclohydrolase 1 feedback regulatory protein (gchfr) from Xenopus tropicalis (Western clawed frog).